Reading from the N-terminus, the 458-residue chain is tRNA modification GTPase MnmE (458 aa).

Positions 26, 88, and 127 each coordinate (6S)-5-formyl-5,6,7,8-tetrahydrofolate. The 155-residue stretch at 224–378 (GLSTAIIGRP…IEDRINQLFF (155 aa)) folds into the TrmE-type G domain. N234 is a binding site for K(+). GTP contacts are provided by residues 234-239 (NVGKSS), 253-259 (TDIAGTT), and 278-281 (DTAG). S238 serves as a coordination point for Mg(2+). K(+) contacts are provided by T253, I255, and T258. Residue T259 coordinates Mg(2+). K458 contributes to the (6S)-5-formyl-5,6,7,8-tetrahydrofolate binding site.

Belongs to the TRAFAC class TrmE-Era-EngA-EngB-Septin-like GTPase superfamily. TrmE GTPase family. In terms of assembly, homodimer. Heterotetramer of two MnmE and two MnmG subunits. Requires K(+) as cofactor.

Its subcellular location is the cytoplasm. In terms of biological role, exhibits a very high intrinsic GTPase hydrolysis rate. Involved in the addition of a carboxymethylaminomethyl (cmnm) group at the wobble position (U34) of certain tRNAs, forming tRNA-cmnm(5)s(2)U34. This Streptococcus pyogenes serotype M12 (strain MGAS9429) protein is tRNA modification GTPase MnmE.